The following is a 402-amino-acid chain: Multidrug resistance protein MdtH (402 aa).

Residues 1–12 (MSRVSQARNLGK) lie on the Cytoplasmic side of the membrane. The chain crosses the membrane as a helical span at residues 13 to 33 (YFLLIDNMLVVLGFFVVFPLI). Residues 34-98 (SIRFVDQMGW…GFATMGIAHE (65 aa)) are Periplasmic-facing. Residues 99–116 (PWLLWFSCLLSGLGGTLF) traverse the membrane as a helical segment. The Cytoplasmic portion of the chain corresponds to 117 to 138 (DPPRSALVVKLIRPQQRGRFFS). A helical transmembrane segment spans residues 139 to 159 (LLMMQDSASAVIGALLGSWLL). Over 160–164 (QYDFR) the chain is Periplasmic. Residues 165-185 (LVCATGPVLFVLCAAFNAWLL) traverse the membrane as a helical segment. Residues 186-213 (PAWKLSTVRTPVREGMTRVMRDKRFVTY) are Cytoplasmic-facing. The helical transmembrane segment at 214-234 (VLTLAGYYMLAVQVMLMLPIM) threads the bilayer. Topologically, residues 235-243 (VNDVAGAPS) are periplasmic. Residues 244-264 (AVKWMYAIEACLSLTLLYPIA) form a helical membrane-spanning segment. The Cytoplasmic segment spans residues 265–276 (RWSEKHFRLEHR). A helical transmembrane segment spans residues 277–297 (LMAGLLIMSLSMMPVGMVSGL). Over 298–299 (QQ) the chain is Periplasmic. The chain crosses the membrane as a helical span at residues 300 to 320 (LFTLICLFYIGSIIAEPARET). Topologically, residues 321-339 (LSASLADARARGSYMGFSR) are cytoplasmic. A helical transmembrane segment spans residues 340-360 (LGLAIGGAIGYIGGGWLFDLG). Topologically, residues 361 to 367 (KSAHQPE) are periplasmic. A helical membrane pass occupies residues 368–388 (LPWMMLGIIGIFTFLALGWQF). The Cytoplasmic segment spans residues 389–402 (SQKRAARRLLERDA).

Belongs to the major facilitator superfamily. DHA1 family. MdtH (TC 2.A.1.2.21) subfamily.

It is found in the cell inner membrane. The chain is Multidrug resistance protein MdtH from Shigella flexneri serotype 5b (strain 8401).